The following is a 292-amino-acid chain: T-box transcription factor tbx-9 (292 aa).

Residues 10-194 (GSQETLWKIF…HNSFAKGFRD (185 aa)) constitute a DNA-binding region (T-box). Disordered stretches follow at residues 192–227 (FRDGNLSRKRRSPSYSDGSNSQSPSPKSRSPPEVAP) and 265–292 (STPSSSSSELSIVKEEDQEVEEDIDIVG). Low complexity-rich tracts occupy residues 204 to 223 (PSYSDGSNSQSPSPKSRSPP) and 265 to 275 (STPSSSSSELS). Acidic residues predominate over residues 280 to 292 (EDQEVEEDIDIVG).

The protein localises to the nucleus. Functionally, transcription factor. Involved in the control of early morphogenesis of the intestine, hypodermis and body-wall muscle. Involved in regulating expression of vab-7. Appears to have partially redundant function to tbx-8. Positively modulates expression of homeobox protein lin-39, perhaps by binding to regulatory regions of the lin-39 gene, acting in the vulval lineage. The sequence is that of T-box transcription factor tbx-9 (tbx-9) from Caenorhabditis elegans.